Here is a 443-residue protein sequence, read N- to C-terminus: Crh-like protein 2 (443 aa).

The N-terminal stretch at 1 to 20 (MVRIGSSLLLATLAATTVSA) is a signal peptide. The 286-residue stretch at 21–306 (ASDPPKCSQD…TVECYDPPSG (286 aa)) folds into the GH16 domain. A disulfide bridge links Cys-56 with Cys-67. The Nucleophile role is filled by Glu-164. Glu-168 acts as the Proton donor in catalysis. Residue Glu-168 coordinates chitin. N-linked (GlcNAc...) asparagine glycosylation is found at Asn-194 and Asn-237. The chitin site is built by Trp-257 and Thr-268. 2 N-linked (GlcNAc...) asparagine glycosylation sites follow: Asn-332 and Asn-359. Low complexity-rich tracts occupy residues 350 to 367 (ASSS…SANT) and 378 to 410 (EPGN…SETS). Positions 350–420 (ASSSASGSAN…ASSNKNAAPS (71 aa)) are disordered. Positions 411–420 (ASSNKNAAPS) are enriched in polar residues. A lipid anchor (GPI-like-anchor amidated asparagine) is attached at Asn-416. A propeptide spans 417–443 (AAPSQNERVLNGSFFAVLVAVVALVTL) (removed in mature form). An N-linked (GlcNAc...) asparagine glycan is attached at Asn-427.

Belongs to the glycosyl hydrolase 16 family. CRH1 subfamily. The GPI-like anchor contains a phosphoceramide lipid group. The anchor position has not been determined.

It is found in the cell membrane. It localises to the secreted. Its subcellular location is the cell wall. It carries out the reaction Random endo-hydrolysis of N-acetyl-beta-D-glucosaminide (1-&gt;4)-beta-linkages in chitin and chitodextrins.. In terms of biological role, dual chitinase/transglycosylase that plays a role in cell wall architecture. Chitinase and transglycosylase activities are coupled. Required for the polysaccharide cross-linking at the septa and the cell wall. More specifically, transfers chitin to 1,6-beta-glucan in the cell wall. The protein is Crh-like protein 2 of Aspergillus fumigatus (strain ATCC MYA-4609 / CBS 101355 / FGSC A1100 / Af293) (Neosartorya fumigata).